Reading from the N-terminus, the 1134-residue chain is Mediator of RNA polymerase II transcription subunit 12 (1134 aa).

This sequence belongs to the Mediator complex subunit 12 family. As to quaternary structure, component of the srb8-11 complex which consists of rb8, srb9(TRAP240), srb10 and srb11. The srb8-11 complex associates with the Mediator complex thereby blocking association with RNA polymerase II and leading to reduced transcriptional activation by Mediator.

It localises to the nucleus. Component of the srb8-11 complex. The srb8-11 complex is a regulatory module of the Mediator complex which is itself involved in regulation of basal and activated RNA polymerase II-dependent transcription. The srb8-11 complex may be involved in the transcriptional repression of a subset of genes regulated by Mediator. It may inhibit the association of the Mediator complex with RNA polymerase II to form the holoenzyme complex. In Schizosaccharomyces pombe (strain 972 / ATCC 24843) (Fission yeast), this protein is Mediator of RNA polymerase II transcription subunit 12 (srb8).